The following is a 24-amino-acid chain: General odorant-binding protein (24 aa).

This sequence belongs to the PBP/GOBP family. In terms of assembly, homodimer. In terms of tissue distribution, antenna.

Functionally, present in the aqueous fluid surrounding olfactory sensory dendrites and are thought to aid in the capture and transport of hydrophobic odorants into and through this fluid. In Antheraea polyphemus (Polyphemus moth), this protein is General odorant-binding protein.